A 63-amino-acid polypeptide reads, in one-letter code: UPF0337 protein PSPTO_1596 (63 aa).

The tract at residues 20-63 (KQAVGKATDNTKLQAEGKAQELKGEGQQAKGEVKDAVKKGVDKV) is disordered. Basic and acidic residues predominate over residues 50–63 (GEVKDAVKKGVDKV).

The protein belongs to the UPF0337 (CsbD) family.

This chain is UPF0337 protein PSPTO_1596, found in Pseudomonas syringae pv. tomato (strain ATCC BAA-871 / DC3000).